A 453-amino-acid polypeptide reads, in one-letter code: tRNA modification GTPase MnmE (453 aa).

(6S)-5-formyl-5,6,7,8-tetrahydrofolate-binding residues include arginine 22, glutamate 79, and lysine 119. One can recognise a TrmE-type G domain in the interval 215 to 376 (GMKVVIAGRP…LREHLKACMG (162 aa)). Residue asparagine 225 coordinates K(+). GTP contacts are provided by residues 225–230 (NAGKSS), 244–250 (TEIAGTT), 269–272 (DTAG), and 334–337 (NKAD). Residue serine 229 coordinates Mg(2+). K(+)-binding residues include threonine 244, isoleucine 246, and threonine 249. Mg(2+) is bound at residue threonine 250. A (6S)-5-formyl-5,6,7,8-tetrahydrofolate-binding site is contributed by lysine 453.

It belongs to the TRAFAC class TrmE-Era-EngA-EngB-Septin-like GTPase superfamily. TrmE GTPase family. In terms of assembly, homodimer. Heterotetramer of two MnmE and two MnmG subunits. K(+) is required as a cofactor.

It localises to the cytoplasm. Its function is as follows. Exhibits a very high intrinsic GTPase hydrolysis rate. Involved in the addition of a carboxymethylaminomethyl (cmnm) group at the wobble position (U34) of certain tRNAs, forming tRNA-cmnm(5)s(2)U34. This is tRNA modification GTPase MnmE from Aeromonas salmonicida (strain A449).